Here is a 456-residue protein sequence, read N- to C-terminus: Argininosuccinate lyase (456 aa).

It belongs to the lyase 1 family. Argininosuccinate lyase subfamily.

The protein resides in the cytoplasm. The catalysed reaction is 2-(N(omega)-L-arginino)succinate = fumarate + L-arginine. It participates in amino-acid biosynthesis; L-arginine biosynthesis; L-arginine from L-ornithine and carbamoyl phosphate: step 3/3. The polypeptide is Argininosuccinate lyase (Listeria monocytogenes serotype 4b (strain CLIP80459)).